Here is a 279-residue protein sequence, read N- to C-terminus: Ribosomal RNA small subunit methyltransferase A (279 aa).

S-adenosyl-L-methionine is bound by residues Asn-27, Leu-29, Gly-54, Glu-76, Asp-102, and Asn-127.

The protein belongs to the class I-like SAM-binding methyltransferase superfamily. rRNA adenine N(6)-methyltransferase family. RsmA subfamily.

Its subcellular location is the cytoplasm. It catalyses the reaction adenosine(1518)/adenosine(1519) in 16S rRNA + 4 S-adenosyl-L-methionine = N(6)-dimethyladenosine(1518)/N(6)-dimethyladenosine(1519) in 16S rRNA + 4 S-adenosyl-L-homocysteine + 4 H(+). Its function is as follows. Specifically dimethylates two adjacent adenosines (A1518 and A1519) in the loop of a conserved hairpin near the 3'-end of 16S rRNA in the 30S particle. May play a critical role in biogenesis of 30S subunits. This is Ribosomal RNA small subunit methyltransferase A from Mesorhizobium japonicum (strain LMG 29417 / CECT 9101 / MAFF 303099) (Mesorhizobium loti (strain MAFF 303099)).